A 447-amino-acid chain; its full sequence is N-succinylarginine dihydrolase (447 aa).

Residues A19–S28, N110, and H137–R138 contribute to the substrate site. The active site involves E174. Position 212 (R212) interacts with substrate. The active site involves H248. The substrate site is built by D250 and N359. Residue C365 is the Nucleophile of the active site.

This sequence belongs to the succinylarginine dihydrolase family. As to quaternary structure, homodimer.

The catalysed reaction is N(2)-succinyl-L-arginine + 2 H2O + 2 H(+) = N(2)-succinyl-L-ornithine + 2 NH4(+) + CO2. It functions in the pathway amino-acid degradation; L-arginine degradation via AST pathway; L-glutamate and succinate from L-arginine: step 2/5. In terms of biological role, catalyzes the hydrolysis of N(2)-succinylarginine into N(2)-succinylornithine, ammonia and CO(2). The sequence is that of N-succinylarginine dihydrolase from Salmonella arizonae (strain ATCC BAA-731 / CDC346-86 / RSK2980).